The primary structure comprises 393 residues: Cysteine protease ATG4B (393 aa).

Residue Met1 is modified to N-acetylmethionine. The residue at position 34 (Ser34) is a Phosphoserine. Residue Cys74 is the Nucleophile of the active site. Cys189 is subject to S-nitrosocysteine. Residues Asp278 and His280 contribute to the active site. S-nitrosocysteine occurs at positions 292 and 301. The cysteines at positions 292 and 361 are disulfide-linked. Phosphoserine is present on residues Ser316 and Ser383. The LIR signature appears at 388–391 (FEIL). Residue Ser392 is modified to Phosphoserine.

It belongs to the peptidase C54 family. Interacts with PFKP; promoting phosphorylation of ATG4B at Ser-34. Interacts with GBP7. Post-translationally, phosphorylation at Ser-383 and Ser-392 promotes autophagy by increasing protein delipidation activity without affecting proteolytic activation of ATG8 proteins. Phosphorylation at Ser-316 by ULK1 inhibits autophagy by decreasing both proteolytic activation and delipidation activities. Phosphorylation at Ser-316 is dephosphorylated by protein phosphatase 2A (PP2A). Phosphorylation at Ser-34 by AKT2 promotes its hydrolase activity, leading to increased proteolytic activation and delipidation of ATG8 family proteins. Phosphorylation at Ser-34 by AKT1 promotes mitochondrial localization and inhibition of the F1F0-ATP synthase activity, leading to elevation of mitochondrial reactive oxygen species (ROS). In terms of processing, ubiquitinated by RNF5, leading to its degradation by the proteasome. S-nitrosylation at Cys-189 and Cys-292 in response to high glucose decreases both proteolytic activation and delipidation activities. Post-translationally, O-glycosylated by OGT, leading to increase protease activity, thereby promoting the proteolytic activation of ATG8 family proteins. In terms of processing, forms reversible intrachain disulfide bonds in response to oxidative stress. Forms interchain disulfide bonds, leading to formation of homooligomers in response to oxidation.

It is found in the cytoplasm. The protein resides in the cytosol. Its subcellular location is the cytoplasmic vesicle. The protein localises to the autophagosome. It localises to the endoplasmic reticulum. It is found in the mitochondrion. It carries out the reaction [protein]-C-terminal L-amino acid-glycyl-phosphatidylethanolamide + H2O = [protein]-C-terminal L-amino acid-glycine + a 1,2-diacyl-sn-glycero-3-phosphoethanolamine. The catalysed reaction is [protein]-C-terminal L-amino acid-glycyl-phosphatidylserine + H2O = [protein]-C-terminal L-amino acid-glycine + a 1,2-diacyl-sn-glycero-3-phospho-L-serine. Its activity is regulated as follows. Inhibited by N-ethylmaleimide. Redox-regulated during autophagy since reducing conditions activate ATG4A whereas an oxidizing environment such as the presence of H(2)O(2) inhibits its activity. The cysteine protease activity compounds is inhibited by styrylquinoline compounds 4-28 and LV-320. Its function is as follows. Cysteine protease that plays a key role in autophagy by mediating both proteolytic activation and delipidation of ATG8 family proteins. Required for canonical autophagy (macroautophagy), non-canonical autophagy as well as for mitophagy. The protease activity is required for proteolytic activation of ATG8 family proteins: cleaves the C-terminal amino acid of ATG8 proteins MAP1LC3A, MAP1LC3B, MAP1LC3C, GABARAPL1, GABARAPL2 and GABARAP, to reveal a C-terminal glycine. Exposure of the glycine at the C-terminus is essential for ATG8 proteins conjugation to phosphatidylethanolamine (PE) and insertion to membranes, which is necessary for autophagy. Protease activity is also required to counteract formation of high-molecular weight conjugates of ATG8 proteins (ATG8ylation): acts as a deubiquitinating-like enzyme that removes ATG8 conjugated to other proteins, such as ATG3. In addition to the protease activity, also mediates delipidation of ATG8 family proteins. Catalyzes delipidation of PE-conjugated forms of ATG8 proteins during macroautophagy. Also involved in non-canonical autophagy, a parallel pathway involving conjugation of ATG8 proteins to single membranes at endolysosomal compartments, by catalyzing delipidation of ATG8 proteins conjugated to phosphatidylserine (PS). Compared to other members of the family (ATG4A, ATG4C or ATG4C), constitutes the major protein for proteolytic activation of ATG8 proteins, while it displays weaker delipidation activity than other ATG4 paralogs. Involved in phagophore growth during mitophagy independently of its protease activity and of ATG8 proteins: acts by regulating ATG9A trafficking to mitochondria and promoting phagophore-endoplasmic reticulum contacts during the lipid transfer phase of mitophagy. The polypeptide is Cysteine protease ATG4B (Mus musculus (Mouse)).